We begin with the raw amino-acid sequence, 281 residues long: Src-like-adapter (281 aa).

The interval methionine 1–glutamate 20 is disordered. Residue glycine 2 is the site of N-myristoyl glycine attachment. Residues serine 7–glutamate 20 are compositionally biased toward low complexity. Residues leucine 22–histidine 82 form the SH3 domain. The region spanning tryptophan 84–cysteine 175 is the SH2 domain. The segment at cysteine 190–aspartate 281 is SLA C-terminal. Residue serine 258 is modified to Phosphoserine. Tyrosine 278 carries the post-translational modification Phosphotyrosine.

As to quaternary structure, homodimer. Interacts with phosphorylated CBL, SYK and LAT. Homodimerization and interaction with phosphorylated CBL occurs via its C-terminal domain. Interacts with PDGFRB and EPHA2. Interacts with phosphorylated proteins ZAP70; CD3Z; VAV1 and LCP2 via its SH2 domain. As to expression, predominantly expressed in lymphoid tissues. Highly expressed in spleen, thymus and lymph nodes. Weakly expressed in lung and brain. Expressed in T-cells and at low level in B-cells.

The protein localises to the cytoplasm. It is found in the endosome. Adapter protein, which negatively regulates T-cell receptor (TCR) signaling. Inhibits T-cell antigen-receptor induced activation of nuclear factor of activated T-cells. Involved in the negative regulation of positive selection and mitosis of T-cells. May act by linking signaling proteins such as ZAP70 with CBL, leading to a CBL dependent degradation of signaling proteins. The sequence is that of Src-like-adapter (Sla) from Mus musculus (Mouse).